The sequence spans 321 residues: Glucokinase (321 aa).

8–13 (GDVGGT) contacts ATP.

This sequence belongs to the bacterial glucokinase family.

The protein localises to the cytoplasm. It carries out the reaction D-glucose + ATP = D-glucose 6-phosphate + ADP + H(+). This is Glucokinase from Escherichia coli (strain SMS-3-5 / SECEC).